Reading from the N-terminus, the 316-residue chain is Secondary metabolism regulator laeA (316 aa).

The protein belongs to the methyltransferase superfamily. LaeA methyltransferase family. Component of the heterotrimeric velvet complex composed of laeA, veA and velB; VeA acting as a bridging protein between laeA and velB.

It is found in the nucleus. The enzyme catalyses L-methionyl-[protein] + S-adenosyl-L-methionine = S-methyl-L-methionyl-[protein] + S-adenosyl-L-homocysteine. In terms of biological role, methyltransferase that performs automethylation. No other methyl-accepting substrate has been identified yet. Component of the velvet transcription factor complex that acts as a global regulator for secondary metabolite gene expression. Controls the biosynthetic gene cluster for beauvericin, a depsipeptide mycotoxin that functions as a virulence determinant. The velvet complex also regulates chromatin structure and transcription of siderophore biosynthetic genes and is required for infection of tomato plants. The velvet complex also governs expression of nitrate metabolism genes. This chain is Secondary metabolism regulator laeA, found in Fusarium oxysporum f. sp. lycopersici (strain 4287 / CBS 123668 / FGSC 9935 / NRRL 34936) (Fusarium vascular wilt of tomato).